Consider the following 232-residue polypeptide: MHDRRAMTEKTILWNSSPGLVPYPDAIAGMEHQVAGIRDGSAPERVWLLEHPPTFTAGTSARDEDLFNPHHFPTYAAGRGGQWTYHGPGQRVAYVMLDLTAPHGVVPARDLRAYVHTLEEWLIRTLRRFDVTGERRADRIGVWVVDARTGAENKIAALGVRVSRWTCWHGVALNVAPNLDDFGGIVPCGIREHGVTSLHALGHKVSLGDVDEALRATWQDLFGSVPTPIGTA.

One can recognise a BPL/LPL catalytic domain in the interval 40–226 (GSAPERVWLL…TWQDLFGSVP (187 aa)). Substrate-binding positions include 79–86 (RGGQWTYH), 157–159 (ALG), and 170–172 (GVA). Residue Cys-188 is the Acyl-thioester intermediate of the active site.

It belongs to the LipB family.

Its subcellular location is the cytoplasm. The enzyme catalyses octanoyl-[ACP] + L-lysyl-[protein] = N(6)-octanoyl-L-lysyl-[protein] + holo-[ACP] + H(+). The protein operates within protein modification; protein lipoylation via endogenous pathway; protein N(6)-(lipoyl)lysine from octanoyl-[acyl-carrier-protein]: step 1/2. Catalyzes the transfer of endogenously produced octanoic acid from octanoyl-acyl-carrier-protein onto the lipoyl domains of lipoate-dependent enzymes. Lipoyl-ACP can also act as a substrate although octanoyl-ACP is likely to be the physiological substrate. The protein is Octanoyltransferase of Gluconacetobacter diazotrophicus (strain ATCC 49037 / DSM 5601 / CCUG 37298 / CIP 103539 / LMG 7603 / PAl5).